The sequence spans 729 residues: Kinesin-like protein KAR3 (729 aa).

Residues 1 to 48 are disordered; it reads MESLPRTPTKGRSTQHLSTPSPKNDILAMNGHKRRNTTTPPPKHTLLK. Residues 1–109 form a globular region; sequence MESLPRTPTK…ENVNELNRTQ (109 aa). Residues 10–22 are compositionally biased toward polar residues; the sequence is KGRSTQHLSTPSP. Residues 110 to 357 are a coiled coil; sequence AILFEKKATL…LEEYIKDTEL (248 aa). N386, R388, R392, E454, G477, S478, G479, K480, T481, F482, E554, K579, and T694 together coordinate ATP. A Kinesin motor domain is found at 386-723; it reads NIRVYCRIRP…LRFASKVNST (338 aa).

It belongs to the TRAFAC class myosin-kinesin ATPase superfamily. Kinesin family. NCD subfamily. As to quaternary structure, interacts with CIK1; the interaction is direct. Interacts with VIK1; the interaction is direct.

It is found in the cytoplasm. It localises to the cytoskeleton. The protein localises to the microtubule organizing center. The protein resides in the spindle pole body. Its subcellular location is the nucleus. It is found in the chromosome. It localises to the spindle. It catalyses the reaction ATP + H2O = ADP + phosphate + H(+). It carries out the reaction ATP + H2O + a kinesin associated with a microtubule at position (n) = ADP + phosphate + a kinesin associated with a microtubule at position (n-1, toward the minus end).. Minus end-directed microtubule (MT) motor involved in spindle midzone assembly, poleward transport of newly captured kinetochores along the lateral side of MTs, karyogamy (nuclear fusion) during mating, and with an essential function in meiosis I. Functions together with the accessory proteins CIK1 or VIK1. Drives the poleward transport of newly captured kinetochores along the lateral side of MTs, both during S-phase and during M-phase. To contribute to spindle midzone assembly during mitotic metaphase, the nuclear KAR3-CIK1 motor cross-links anti-parallel microtubules to align them on the spindle axis; as the motor travels polewards splayed microtubules are pulled into alignment. During the karyogamy (nuclear fusion) step of mating, KAR3-CIK1 cross-links antiparallel cytoplasmic microtubules emanating from the spindle pole bodies of mating partners; the motor activity of KAR3 creates the force that pulls the nuclei together by sliding cross-linked microtubules past one another. KAR3-CIK1 promotes microtubule shortening predominantly from the microtubule plus-end. Together with cytoplasmic VIK1, may act to stabilize microtubules. Requires accessory protein VIK1 for spindle pole body localization and to allow the CIN8 and KIP1 motors to generate outwardly directed spindle forces. Essential during meiosis I. The ATPase activity is stimulated by microtubule-binding. The sequence is that of Kinesin-like protein KAR3 (KAR3) from Saccharomyces cerevisiae (strain ATCC 204508 / S288c) (Baker's yeast).